We begin with the raw amino-acid sequence, 255 residues long: Hydroxyacylglutathione hydrolase (255 aa).

Zn(2+) is bound by residues H56, H58, D60, H61, H112, D129, and H167.

This sequence belongs to the metallo-beta-lactamase superfamily. Glyoxalase II family. In terms of assembly, monomer. Requires Zn(2+) as cofactor.

The enzyme catalyses an S-(2-hydroxyacyl)glutathione + H2O = a 2-hydroxy carboxylate + glutathione + H(+). It participates in secondary metabolite metabolism; methylglyoxal degradation; (R)-lactate from methylglyoxal: step 2/2. Thiolesterase that catalyzes the hydrolysis of S-D-lactoyl-glutathione to form glutathione and D-lactic acid. The polypeptide is Hydroxyacylglutathione hydrolase (Pseudomonas fluorescens (strain SBW25)).